The primary structure comprises 269 residues: Tungstate-binding protein TupA (269 aa).

Residues 1–17 form the signal peptide; sequence MKKIISLALALALSASA.

As to quaternary structure, the complex is composed of two ATP-binding proteins (TupC), two transmembrane proteins (TupB) and a solute-binding protein (TupA).

It is found in the periplasm. Its function is as follows. Part of an ABC transporter complex involved in ultra-high affinity tungstate uptake. Specifically binds tungstate. This is Tungstate-binding protein TupA from Campylobacter jejuni subsp. jejuni serotype O:2 (strain ATCC 700819 / NCTC 11168).